The sequence spans 317 residues: Annexin A13 (317 aa).

A lipid anchor (N-myristoyl glycine) is attached at glycine 2. Annexin repeat units follow at residues 15 to 86 (FDAD…ALLD), 87 to 158 (RPNE…SLLQ), 170 to 242 (ELAG…TIVR), and 246 to 317 (DLEG…ALLH).

Belongs to the annexin family. As to quaternary structure, monomer and homodimer. Detected on the tips of microvilli in small intestine (at protein level).

It is found in the apical cell membrane. The protein localises to the cell membrane. The protein resides in the cytoplasmic vesicle. In terms of biological role, binds to membranes enriched in phosphatidylserine or phosphatidylglycerol in a calcium-dependent manner. Half-maximal membrane binding requires about 60 uM calcium. Does not bind to membranes that lack phospholipids with an acidic headgroup. The protein is Annexin A13 (Anxa13) of Mus musculus (Mouse).